The sequence spans 261 residues: Syntaxin-7 (261 aa).

Serine 2 carries the N-acetylserine modification. Topologically, residues 2-238 (SYTPGIGGDS…DYQRKSRKTL (237 aa)) are cytoplasmic. The residue at position 4 (threonine 4) is a Phosphothreonine. Phosphoserine is present on serine 45. Residues 47 to 68 (ELRQLLQQKQQYTNQLAKETDK) are a coiled coil. Serine 75 is modified (phosphoserine). Residue threonine 79 is modified to Phosphothreonine. 4 positions are modified to phosphoserine: serine 125, serine 126, serine 129, and serine 205. Positions 128-148 (VSGGFPEDSSKEKNLVSWESQ) are disordered. Positions 165–227 (LRLIHERESS…QQANQQLSRA (63 aa)) constitute a t-SNARE coiled-coil homology domain. The chain crosses the membrane as a helical; Anchor for type IV membrane protein span at residues 239–259 (CIIIFILVVRIVIICLIVWGL). The Vesicular segment spans residues 260 to 261 (KG).

It belongs to the syntaxin family. In terms of assembly, interacts with VPS11, VPS16 and VPS18. Interacts with VPS33A. Forms a SNARE complex with VTI1B, STX8 and VAMP8 which functions in the homotypic fusion of late endosomes. Component of the SNARE complex composed of STX7, STX8, VAMP7 and VTI1B that is required for heterotypic fusion of late endosomes with lysosomes. Interacts with TPC1.

The protein localises to the early endosome membrane. May be involved in protein trafficking from the plasma membrane to the early endosome (EE) as well as in homotypic fusion of endocytic organelles. Mediates the endocytic trafficking from early endosomes to late endosomes and lysosomes. The sequence is that of Syntaxin-7 (Stx7) from Mus musculus (Mouse).